Reading from the N-terminus, the 917-residue chain is DNA repair endonuclease XPF (917 aa).

A helicase-like region spans residues 1–457 (MEPGLSGERR…EVWVNVRKGD (457 aa)). Leucine-zipper stretches follow at residues 233-254 (LNAC…DLSL) and 270-298 (LDPL…LQYL). K289 is modified (N6-acetyllysine). Basic and acidic residues predominate over residues 454–479 (RKGDGPKRTTKSDKRPKAAPNKERAS). Disordered regions lie at residues 454 to 524 (RKGD…SSPE) and 643 to 681 (VPEE…QNGT). Positions 487-492 (KRKKQE) match the Nuclear localization signal motif. Basic and acidic residues predominate over residues 507-516 (EDKALEEDLC). Residue S522 is modified to Phosphoserine. Positions 643–653 (VPEEREGRDET) are enriched in basic and acidic residues. A nuclease region spans residues 659-814 (RGSAALDAPT…PSPHATAELF (156 aa)). Residues 684-764 (SIVVDMREFR…RPVLLIEFDP (81 aa)) form the ERCC4 domain. Residue S765 is modified to Phosphoserine. The segment at 838 to 906 (TLPESDRYNP…QLHDFLHTAY (69 aa)) is hhH2, dimerization with ERCC1. K912 is modified (N6-acetyllysine).

This sequence belongs to the XPF family. In terms of assembly, heterodimer composed of ERCC1 and ERCC4/XPF. Interacts with SLX4/BTBD12; this interaction is direct and links the ERCC1-ERCC4/XPF complex to SLX4, which may coordinate the action of the structure-specific endonuclease during DNA repair. Requires Mg(2+) as cofactor. Acetylation at Lys-912 by KAT5 promotes interaction with ERCC1 by disrupting a salt bridge between Asp-908 and Lys-912, thereby exposing a second binding site for ERCC1. Deacetylated by SIRT1.

The protein resides in the nucleus. It localises to the chromosome. Catalytic component of a structure-specific DNA repair endonuclease responsible for the 5-prime incision during DNA repair, and which is essential for nucleotide excision repair (NER) and interstrand cross-link (ICL) repair. This Mus musculus (Mouse) protein is DNA repair endonuclease XPF.